We begin with the raw amino-acid sequence, 176 residues long: Large ribosomal subunit protein eL6 (176 aa).

Positions 1–27 (MSQVAPKWYQSEDVPAPKQTRKTARPQ) are disordered.

This sequence belongs to the eukaryotic ribosomal protein eL6 family. As to quaternary structure, component of the large ribosomal subunit. Mature ribosomes consist of a small (40S) and a large (60S) subunit. The 40S subunit contains about 32 different proteins and 1 molecule of RNA (18S). The 60S subunit contains 45 different proteins and 3 molecules of RNA (25S, 5.8S and 5S).

The protein localises to the cytoplasm. In terms of biological role, component of the ribosome, a large ribonucleoprotein complex responsible for the synthesis of proteins in the cell. The small ribosomal subunit (SSU) binds messenger RNAs (mRNAs) and translates the encoded message by selecting cognate aminoacyl-transfer RNA (tRNA) molecules. The large subunit (LSU) contains the ribosomal catalytic site termed the peptidyl transferase center (PTC), which catalyzes the formation of peptide bonds, thereby polymerizing the amino acids delivered by tRNAs into a polypeptide chain. The nascent polypeptides leave the ribosome through a tunnel in the LSU and interact with protein factors that function in enzymatic processing, targeting, and the membrane insertion of nascent chains at the exit of the ribosomal tunnel. The polypeptide is Large ribosomal subunit protein eL6 (Candida albicans (strain SC5314 / ATCC MYA-2876) (Yeast)).